The primary structure comprises 118 residues: Large ribosomal subunit protein bL19 (118 aa).

Belongs to the bacterial ribosomal protein bL19 family.

In terms of biological role, this protein is located at the 30S-50S ribosomal subunit interface and may play a role in the structure and function of the aminoacyl-tRNA binding site. The chain is Large ribosomal subunit protein bL19 from Nautilia profundicola (strain ATCC BAA-1463 / DSM 18972 / AmH).